The sequence spans 205 residues: Small ribosomal subunit protein uS4 (205 aa).

Residues 18–49 are disordered; it reads NIWGRPKSPVNKREYGPGQHGQRRKGKLSDFG. Residues 94 to 157 form the S4 RNA-binding domain; it reads RRLDAIVYRA…KQLALVLEAN (64 aa).

This sequence belongs to the universal ribosomal protein uS4 family. In terms of assembly, part of the 30S ribosomal subunit. Contacts protein S5. The interaction surface between S4 and S5 is involved in control of translational fidelity.

One of the primary rRNA binding proteins, it binds directly to 16S rRNA where it nucleates assembly of the body of the 30S subunit. Functionally, with S5 and S12 plays an important role in translational accuracy. The polypeptide is Small ribosomal subunit protein uS4 (Afipia carboxidovorans (strain ATCC 49405 / DSM 1227 / KCTC 32145 / OM5) (Oligotropha carboxidovorans)).